A 348-amino-acid polypeptide reads, in one-letter code: Actin maturation protease (348 aa).

Positions 1–18 (MISPCSPPLEPPVPPPET) are enriched in pro residues. The tract at residues 1 to 64 (MISPCSPPLE…LPPPPRTTGF (64 aa)) is disordered. The segment covering 34 to 48 (NLPELAFPPSSFQAS) has biased composition (low complexity). A compositionally biased stretch (pro residues) spans 49–60 (VPPPPPLPPPPR). The peptidase C39-like stretch occupies residues 121–241 (SLIQEGPQCG…WAVSAGVLLG (121 aa)). Cysteine 129 is an active-site residue. A Phosphoserine modification is found at serine 313.

It belongs to the ACTMAP family. In terms of assembly, interacts (via N-terminus) with PFN2; the interaction may facilitate efficient cleavage of the acetylated N-terminus of immature actin. Interacts with PFN1.

The protein localises to the cytoplasm. It catalyses the reaction N-terminal N(alpha)-acetyl-L-methionyl-L-aspartyl-[protein] + H2O = N-terminal L-aspartyl-[protein] + N-acetyl-L-methionine. The enzyme catalyses N-terminal N(alpha)-acetyl-L-methionyl-L-glutamyl-[protein] + H2O = N-terminal L-glutamyl-[protein] + N-acetyl-L-methionine. The catalysed reaction is N-terminal N(alpha)-acetyl-L-cysteinyl-L-aspartyl-[protein] + H2O = N-terminal L-aspartyl-[protein] + N-acetyl-L-cysteine. It carries out the reaction N-terminal N(alpha)-acetyl-L-cysteinyl-L-glutamyl-[protein] + H2O = N-terminal L-glutamyl-[protein] + N-acetyl-L-cysteine. Actin maturation protease that specifically mediates the cleavage of immature acetylated N-terminal actin, thereby contributing to actin maturation. Cleaves N-terminal acetylated methionine of immature cytoplasmic beta- and gamma-actins ACTB and ACTG1 after translation. Cleaves N-terminal acetylated cysteine of muscle alpha-actins ACTA1, ACTC1 and ACTA2 after canonical removal of N-terminal methionine. In Bos taurus (Bovine), this protein is Actin maturation protease.